The primary structure comprises 188 residues: NADH-quinone oxidoreductase subunit I (188 aa).

4Fe-4S ferredoxin-type domains follow at residues 44-74 and 90-119; these read LNRYADGLEKCIGCELCAWACPADAIFVEGA and RVYQINYLRCIGCGLCIEACPTRALTMTNE. Cysteine 54, cysteine 57, cysteine 60, cysteine 64, cysteine 99, cysteine 102, cysteine 105, and cysteine 109 together coordinate [4Fe-4S] cluster. Positions 144–188 are disordered; it reads GMVDSPHPMAPGTTAEDYYRGTVTGGAAPASQDEPEADDTAGDRP. The segment covering 176–188 has biased composition (acidic residues); sequence DEPEADDTAGDRP.

This sequence belongs to the complex I 23 kDa subunit family. NDH-1 is composed of 14 different subunits. Subunits NuoA, H, J, K, L, M, N constitute the membrane sector of the complex. Requires [4Fe-4S] cluster as cofactor.

The protein resides in the cell membrane. It catalyses the reaction a quinone + NADH + 5 H(+)(in) = a quinol + NAD(+) + 4 H(+)(out). Its function is as follows. NDH-1 shuttles electrons from NADH, via FMN and iron-sulfur (Fe-S) centers, to quinones in the respiratory chain. The immediate electron acceptor for the enzyme in this species is believed to be ubiquinone. Couples the redox reaction to proton translocation (for every two electrons transferred, four hydrogen ions are translocated across the cytoplasmic membrane), and thus conserves the redox energy in a proton gradient. In Rhodococcus opacus (strain B4), this protein is NADH-quinone oxidoreductase subunit I.